The following is a 78-amino-acid chain: uncharacterized protein (78 aa).

Transmembrane regions (helical) follow at residues 7 to 27 and 41 to 61; these read ICLV…FFQF and LSRI…GLLF.

Its subcellular location is the cell membrane. This is an uncharacterized protein from Bacillus subtilis (strain 168).